Reading from the N-terminus, the 84-residue chain is Cell division topological specificity factor (84 aa).

This sequence belongs to the MinE family.

Prevents the cell division inhibition by proteins MinC and MinD at internal division sites while permitting inhibition at polar sites. This ensures cell division at the proper site by restricting the formation of a division septum at the midpoint of the long axis of the cell. This Paraburkholderia phymatum (strain DSM 17167 / CIP 108236 / LMG 21445 / STM815) (Burkholderia phymatum) protein is Cell division topological specificity factor.